We begin with the raw amino-acid sequence, 229 residues long: Large ribosomal subunit protein uL1 (229 aa).

The protein belongs to the universal ribosomal protein uL1 family. In terms of assembly, part of the 50S ribosomal subunit.

In terms of biological role, binds directly to 23S rRNA. The L1 stalk is quite mobile in the ribosome, and is involved in E site tRNA release. Its function is as follows. Protein L1 is also a translational repressor protein, it controls the translation of the L11 operon by binding to its mRNA. This chain is Large ribosomal subunit protein uL1, found in Actinobacillus pleuropneumoniae serotype 3 (strain JL03).